Consider the following 690-residue polypeptide: DNA ligase (690 aa).

Residues 36–40, 85–86, and Glu-124 each bind NAD(+); these read DSVYD and SL. Lys-126 (N6-AMP-lysine intermediate) is an active-site residue. NAD(+) is bound by residues Arg-147, Glu-184, Lys-308, and Lys-332. Positions 426, 429, 444, and 449 each coordinate Zn(2+). The region spanning 614 to 690 is the BRCT domain; it reads NQSNVFDGKS…INENELKLLL (77 aa).

It belongs to the NAD-dependent DNA ligase family. LigA subfamily. Mg(2+) is required as a cofactor. Mn(2+) serves as cofactor.

It catalyses the reaction NAD(+) + (deoxyribonucleotide)n-3'-hydroxyl + 5'-phospho-(deoxyribonucleotide)m = (deoxyribonucleotide)n+m + AMP + beta-nicotinamide D-nucleotide.. Its function is as follows. DNA ligase that catalyzes the formation of phosphodiester linkages between 5'-phosphoryl and 3'-hydroxyl groups in double-stranded DNA using NAD as a coenzyme and as the energy source for the reaction. It is essential for DNA replication and repair of damaged DNA. The protein is DNA ligase of Prochlorococcus marinus (strain NATL2A).